Here is a 93-residue protein sequence, read N- to C-terminus: Non-histone chromosomal protein 6A (93 aa).

Disordered stretches follow at residues 1-23 and 69-93; these read MVTP…APKR and PYEA…ATLA. Over residues 7–16 the composition is skewed to basic residues; that stretch reads PKKRTTRKKK. A DNA-binding region (HMG box) is located at residues 21–89; the sequence is PKRALSAYMF…RYESEKELYN (69 aa). The span at 69–87 shows a compositional bias: basic and acidic residues; sequence PYEAKAQADKKRYESEKEL.

Belongs to the NHP6 family. Weakly associates with the stable SPT16-POB3 heterodimer to form the FACT (yFACT or SNP) complex, which is associated with nucleosomes. Multiple molecules of NHP6 (NHP6A and/or NHP6B) are required to recruit the SPT16-POB3 heterodimer to DNA.

It localises to the nucleus. The protein resides in the chromosome. In terms of biological role, DNA-binding protein that induces severe bending of DNA. Required for DNA-binding by the FACT complex, a general chromatin factor that acts to reorganize nucleosomes. The FACT complex is involved in multiple processes that require DNA as a template such as mRNA elongation, DNA replication and DNA repair. Also augments the fidelity of transcription by RNA polymerase III independently of any role in the FACT complex. Required for transcriptional initiation fidelity of some but not all tRNA genes. Seems to be functionally redundant with NHP6B. In Saccharomyces cerevisiae (strain ATCC 204508 / S288c) (Baker's yeast), this protein is Non-histone chromosomal protein 6A (NHP6A).